The following is a 604-amino-acid chain: Integrin alpha-IIb (604 aa).

One copy of the FG-GAP repeat lies at 1-61 (QVLDSPFPTG…ASVQLLVQDS (61 aa)). The Extracellular segment spans residues 1–558 (QVLDSPFPTG…TQLLRALEER (558 aa)). Ca(2+)-binding residues include Asp22, Asp24, Asn26, Tyr28, and Asp30. Intrachain disulfides connect Cys69–Cys80 and Cys86–Cys141. Asn166 is a glycosylation site (N-linked (GlcNAc...) asparagine). 4 disulfide bridges follow: Cys198-Cys204, Cys270-Cys283, Cys422-Cys486, and Cys476-Cys481. A glycan (N-linked (GlcNAc...) asparagine) is linked at Asn276. Asn527 carries N-linked (GlcNAc...) asparagine glycosylation. The helical transmembrane segment at 559–584 (AIPIWWVLVGVLGGLLLLTILVLAMW) threads the bilayer. At 585–604 (KVGFFKRNRPPLEEDDEEGE) the chain is on the cytoplasmic side. The GFFKR motif motif lies at 587 to 591 (GFFKR).

This sequence belongs to the integrin alpha chain family. In terms of assembly, heterodimer of an alpha and a beta subunit. The alpha subunit is composed of a heavy and a light chain linked by a disulfide bond. Alpha-IIb associates with beta-3. Directly interacts with RNF181. Interacts (via C-terminus cytoplasmic tail region) with CIB1; the interaction is direct and calcium-dependent. Interacts (via C-terminus cytoplasmic tail region) with CIB2, CIB3 and CIB4; the interactions are stabilized/increased in a calcium and magnesium-dependent manner. ITGA2B:ITGB3 interacts with PPIA/CYPA; the interaction is ROS and PPIase activity-dependent and is increased in the presence of thrombin. ITGA2B:ITGB3 interacts with SELP (via C-type lectin domain); the interaction mediates cell-cell interaction and adhesion.

The protein localises to the membrane. Integrin alpha-IIb/beta-3 is a receptor for fibronectin, fibrinogen, plasminogen, prothrombin, thrombospondin and vitronectin. It recognizes the sequence R-G-D in a wide array of ligands. It recognizes the sequence H-H-L-G-G-G-A-K-Q-A-G-D-V in fibrinogen gamma chain. Following activation integrin alpha-IIb/beta-3 brings about platelet/platelet interaction through binding of soluble fibrinogen. This step leads to rapid platelet aggregation which physically plugs ruptured endothelial cell surface. The polypeptide is Integrin alpha-IIb (ITGA2B) (Papio cynocephalus (Yellow baboon)).